Here is a 262-residue protein sequence, read N- to C-terminus: Small ribosomal subunit protein eS4B (262 aa).

Residues 42 to 105 (LPLIVFLRNR…GEHFRLVYDI (64 aa)) enclose the S4 RNA-binding domain. The residue at position 223 (S223) is a Phosphoserine.

It belongs to the eukaryotic ribosomal protein eS4 family. Component of the small ribosomal subunit (SSU). Mature yeast ribosomes consist of a small (40S) and a large (60S) subunit. The 40S small subunit contains 1 molecule of ribosomal RNA (18S rRNA) and at least 33 different proteins. The large 60S subunit contains 3 rRNA molecules (25S, 5.8S and 5S rRNA) and at least 46 different proteins.

It localises to the cytoplasm. The protein resides in the nucleus. The protein localises to the nucleolus. Component of the ribosome, a large ribonucleoprotein complex responsible for the synthesis of proteins in the cell. The small ribosomal subunit (SSU) binds messenger RNAs (mRNAs) and translates the encoded message by selecting cognate aminoacyl-transfer RNA (tRNA) molecules. The large subunit (LSU) contains the ribosomal catalytic site termed the peptidyl transferase center (PTC), which catalyzes the formation of peptide bonds, thereby polymerizing the amino acids delivered by tRNAs into a polypeptide chain. The nascent polypeptides leave the ribosome through a tunnel in the LSU and interact with protein factors that function in enzymatic processing, targeting, and the membrane insertion of nascent chains at the exit of the ribosomal tunnel. The protein is Small ribosomal subunit protein eS4B (rps402) of Schizosaccharomyces pombe (strain 972 / ATCC 24843) (Fission yeast).